The sequence spans 309 residues: MKPLLDVLMILDALEKEGSFAAASAKLYKTPSALSYTVHKLESDLNIQLLDRSGHRAKFTRTGKMLLEKGREVLHTVRELEKQAIKLHEGWENELVIGVDDTFPFSLLAPLIEAFYQHHSVTRLKFINGVLGGSWDALTQGRADIIVGAMHEPPSSSEFGFSRLGDLEQVFAVAPHHPLALEEEPLNRRIIKRYRAIVVGDTAQAGASTASQLLDEQEAITVFDFKTKLELQISGLGCGYLPRYLAQRFLDSGALIEKKVVAQTLFEPVWIGWNEQTAGLASGWWRDEILANSAIAGVYAKSDDGKSAI.

The HTH lysR-type domain occupies 1–60; that stretch reads MKPLLDVLMILDALEKEGSFAAASAKLYKTPSALSYTVHKLESDLNIQLLDRSGHRAKFT. The H-T-H motif DNA-binding region spans 20–39; the sequence is FAAASAKLYKTPSALSYTVH.

It belongs to the LysR transcriptional regulatory family.

This is an uncharacterized protein from Escherichia coli (strain K12).